The following is a 208-amino-acid chain: ATP synthase subunit b 1 (208 aa).

Positions 1–18 (MFVSTAFAQTATESQPAS) are enriched in polar residues. The disordered stretch occupies residues 1-26 (MFVSTAFAQTATESQPASTAGEHGAA). The helical transmembrane segment at 56–78 (SQVLWLAITFGLFYLFLSRVVLP) threads the bilayer.

It belongs to the ATPase B chain family. As to quaternary structure, F-type ATPases have 2 components, F(1) - the catalytic core - and F(0) - the membrane proton channel. F(1) has five subunits: alpha(3), beta(3), gamma(1), delta(1), epsilon(1). F(0) has three main subunits: a(1), b(2) and c(10-14). The alpha and beta chains form an alternating ring which encloses part of the gamma chain. F(1) is attached to F(0) by a central stalk formed by the gamma and epsilon chains, while a peripheral stalk is formed by the delta and b chains.

It localises to the cell inner membrane. Its function is as follows. F(1)F(0) ATP synthase produces ATP from ADP in the presence of a proton or sodium gradient. F-type ATPases consist of two structural domains, F(1) containing the extramembraneous catalytic core and F(0) containing the membrane proton channel, linked together by a central stalk and a peripheral stalk. During catalysis, ATP synthesis in the catalytic domain of F(1) is coupled via a rotary mechanism of the central stalk subunits to proton translocation. In terms of biological role, component of the F(0) channel, it forms part of the peripheral stalk, linking F(1) to F(0). This chain is ATP synthase subunit b 1, found in Brucella abortus (strain 2308).